The following is a 363-amino-acid chain: Carbamoyl phosphate synthase small chain (363 aa).

The tract at residues 1–172 (MTKRILMLED…AFASPGDGKR (172 aa)) is CPSase. Residues serine 46, glycine 220, and glycine 222 each coordinate L-glutamine. The Glutamine amidotransferase type-1 domain occupies 172–359 (RVVLVDYGVK…MEMMNGKEEG (188 aa)). The active-site Nucleophile is cysteine 247. Positions 248, 251, 289, 291, and 292 each coordinate L-glutamine. Active-site residues include histidine 332 and glutamate 334.

It belongs to the CarA family. Composed of two chains; the small (or glutamine) chain promotes the hydrolysis of glutamine to ammonia, which is used by the large (or ammonia) chain to synthesize carbamoyl phosphate. Tetramer of heterodimers (alpha,beta)4.

It carries out the reaction hydrogencarbonate + L-glutamine + 2 ATP + H2O = carbamoyl phosphate + L-glutamate + 2 ADP + phosphate + 2 H(+). The enzyme catalyses L-glutamine + H2O = L-glutamate + NH4(+). Its pathway is amino-acid biosynthesis; L-arginine biosynthesis; carbamoyl phosphate from bicarbonate: step 1/1. The protein operates within pyrimidine metabolism; UMP biosynthesis via de novo pathway; (S)-dihydroorotate from bicarbonate: step 1/3. In terms of biological role, small subunit of the glutamine-dependent carbamoyl phosphate synthetase (CPSase). CPSase catalyzes the formation of carbamoyl phosphate from the ammonia moiety of glutamine, carbonate, and phosphate donated by ATP, constituting the first step of 2 biosynthetic pathways, one leading to arginine and/or urea and the other to pyrimidine nucleotides. The small subunit (glutamine amidotransferase) binds and cleaves glutamine to supply the large subunit with the substrate ammonia. This Listeria monocytogenes serotype 4b (strain F2365) protein is Carbamoyl phosphate synthase small chain.